Reading from the N-terminus, the 1196-residue chain is Homeodomain-interacting protein kinase 2 (1196 aa).

The residue at position 16 (Ser16) is a Phosphoserine. Residue Lys32 forms a Glycyl lysine isopeptide (Lys-Gly) (interchain with G-Cter in SUMO); alternate linkage. Residue Lys32 forms a Glycyl lysine isopeptide (Lys-Gly) (interchain with G-Cter in SUMO2); alternate linkage. A disordered region spans residues 50–69; it reads VYSQSKNIPPSQPASTTVST. A transcriptional corepression region spans residues 97-230; that stretch reads SASSTSVTGQ…TNEIVAIKIL (134 aa). Ser118 and Ser135 each carry phosphoserine. Thr141 is subject to Phosphothreonine. An interaction with DAXX region spans residues 189–520; the sequence is HEVLCSMTNT…DADKRVTPIE (332 aa). Positions 199–527 constitute a Protein kinase domain; that stretch reads YEVLEFLGRG…PIETLNHPFV (329 aa). Residues 205–213 and Lys228 contribute to the ATP site; that span reads LGRGTFGQV. Residues Thr252 and Thr273 each carry the phosphothreonine modification. The Proton acceptor role is filled by Asp324. Tyr361 bears the Phosphotyrosine; by autocatalysis mark. Ser441 is modified (phosphoserine). A phosphothreonine mark is found at Thr482, Thr517, and Thr566. Residues 539–844 form an interaction with SKI and SMAD1 region; it reads AHVKSCFQNM…KENTPPRCAM (306 aa). The segment at 600–800 is interaction with DAZAP2; that stretch reads SATLSLANPE…MRQQPTSTTS (201 aa). A phosphoserine mark is found at Ser634 and Ser668. Thr687 carries the post-translational modification Phosphothreonine. Positions 752–897 are interaction with POU4F1; the sequence is RNTHAHGSHY…ITISSDTDEE (146 aa). Positions 774–876 are interaction with CTBP1; that stretch reads HVTLPAAQPL…TRERQRQTIV (103 aa). Residues 787–897 are interaction with HMGA1; it reads VAHVMRQQPT…ITISSDTDEE (111 aa). Disordered regions lie at residues 792–847 and 891–963; these read RQQP…MVHS and SSDT…CTGN. Polar residues predominate over residues 793–829; that stretch reads QQPTSTTSSRKSKQHQSSVRNVSTCEVTSSQAISSPQ. The Nuclear localization signal 1 (NLS1) motif lies at 802–805; sequence RKSK. Phosphoserine is present on residues Ser815 and Ser827. The short motif at 832–835 is the Nuclear localization signal 2 (NLS2) element; it reads KRVK. The tract at residues 839 to 934 is interaction with TP53 and TP73; the sequence is PPRCAMVHSS…PYSDSSSNTS (96 aa). The tract at residues 873–907 is interaction with UBE2I; sequence QTIVIPDTPSPTVSVITISSDTDEEEEQKHAPTST. Residues 873–980 are localization to nuclear speckles; the sequence is QTIVIPDTPS…PLKTQASEVL (108 aa). The interval 873–980 is required for localization to nuclear speckles; sequence QTIVIPDTPS…PLKTQASEVL (108 aa). Positions 884–908 are SUMO interaction motifs (SIM); required for nuclear localization and kinase activity; the sequence is TVSVITISSDTDEEEEQKHAPTSTV. Residues 923–937 are compositionally biased toward low complexity; that stretch reads DSPYSDSSSNTSPYS. Ser934 is modified (phosphoserine). Residues 935 to 1050 form an interaction with AXIN1 region; it reads PYSVQQRTGH…LSQAQQHMAA (116 aa). Residues 938 to 951 are compositionally biased toward polar residues; sequence VQQRTGHNGTNTLD. Residues Lys953 and Lys973 each participate in a glycyl lysine isopeptide (Lys-Gly) (interchain with G-Cter in SUMO2) cross-link. The segment at 984–1196 is autoinhibitory domain (AID); it reads DSLGPAISAS…PAKVNQYPYI (213 aa). Ser991, Ser993, Ser1042, Ser1153, and Ser1186 each carry phosphoserine. The span at 991–1046 shows a compositional bias: low complexity; the sequence is SASHHSSSFKSKSSSTVTSTSGHSSGSSSGAIAYRQQRPGPHFQQQQPLNLSQAQQ. The interval 991–1058 is disordered; it reads SASHHSSSFK…AADRTGSHRR (68 aa). Residue Lys1189 forms a Glycyl lysine isopeptide (Lys-Gly) (interchain with G-Cter in SUMO) linkage.

Belongs to the protein kinase superfamily. CMGC Ser/Thr protein kinase family. HIPK subfamily. Interacts with CREB1, SIAH1, WSB1, CBX4, TRADD, p53/TP53, TP73, TP63, CREBBP, DAXX, P53DINP1, SKI, SMAD1, SMAD2 and SMAD3, but not SMAD4. Interacts with SP100; positively regulates TP53-dependent transcription. Interacts with ATF1, PML, RUNX1, EP300, NKX1-2, NKX2-5, UBE2I, HMGA1, CTBP1, AXIN1, NLK, MYB, POU4F1, POU4F2, POU4F3, UBE2I, UBL1 and ZBTB4. Probably part of a complex consisting of p53/TP53, HIPK2 and AXIN1. Interacts with DAZAP2; the interaction results in phosphorylation of DAZAP2 which causes localization of DAZAP2 to the nucleus, reduces interaction of DAZAP2 with HIPK2 and prevents DAZAP2-dependent degradation of HIPK2. Interacts with SIAH1; the interaction is promoted by DAZAP2 and results in SIAH1-mediated ubiquitination and subsequent proteasomal degradation of HIPK2. As to quaternary structure, interacts with SPN/CD43 cytoplasmic tail. Post-translationally, sumoylated. When conjugated it is directed to nuclear speckles. Desumoylated by SENP1. Sumoylation on Lys-32 is promoted by the E3 SUMO-protein ligase CBX4. Autophosphorylation at Tyr-361 in the activation loop activates the kinase and promotes nuclear localization. In terms of processing, ubiquitinated by FBXO3, WSB1 and SIAH1, leading to rapid proteasome-dependent degradation. The degradation mediated by FBXO3, but not ubiquitination, is prevented in the presence of PML. The degradation mediated by WSB1 and SIAH1 is reversibly reduced upon DNA damage. Post-translationally, cleaved at Asp-923 and Asp-984 by CASP6 in a p53/TP53-dependent manner. The cleaved form lacks the autoinhibitory C-terminal domain (AID), resulting in a hyperactive kinase, which potentiates p53/TP53 Ser-46 phosphorylation and subsequent activation of the cell death machinery. As to expression, ubiquitous. Abundant in muscle, heart, small intestine, stomach, kidney and brain; and low in testis, skin and lung.

The protein localises to the nucleus. It localises to the PML body. Its subcellular location is the cytoplasm. It catalyses the reaction L-seryl-[protein] + ATP = O-phospho-L-seryl-[protein] + ADP + H(+). It carries out the reaction L-threonyl-[protein] + ATP = O-phospho-L-threonyl-[protein] + ADP + H(+). In terms of biological role, serine/threonine-protein kinase involved in transcription regulation, p53/TP53-mediated cellular apoptosis and regulation of the cell cycle. Acts as a corepressor of several transcription factors, including SMAD1 and POU4F1/Brn3a and probably NK homeodomain transcription factors. Phosphorylates PDX1, ATF1, PML, p53/TP53, CREB1, CTBP1, CBX4, RUNX1, EP300, CTNNB1, HMGA1, ZBTB4 and DAZAP2. Inhibits cell growth and promotes apoptosis through the activation of p53/TP53 both at the transcription level and at the protein level (by phosphorylation and indirect acetylation). The phosphorylation of p53/TP53 may be mediated by a p53/TP53-HIPK2-AXIN1 complex. Involved in the response to hypoxia by acting as a transcriptional co-suppressor of HIF1A. Mediates transcriptional activation of TP73. In response to TGFB, cooperates with DAXX to activate JNK. Negative regulator through phosphorylation and subsequent proteasomal degradation of CTNNB1 and the antiapoptotic factor CTBP1. In the Wnt/beta-catenin signaling pathway acts as an intermediate kinase between MAP3K7/TAK1 and NLK to promote the proteasomal degradation of MYB. Phosphorylates CBX4 upon DNA damage and promotes its E3 SUMO-protein ligase activity. Activates CREB1 and ATF1 transcription factors by phosphorylation in response to genotoxic stress. In response to DNA damage, stabilizes PML by phosphorylation. PML, HIPK2 and FBXO3 may act synergically to activate p53/TP53-dependent transactivation. Promotes angiogenesis, and is involved in erythroid differentiation, especially during fetal liver erythropoiesis. Phosphorylation of RUNX1 and EP300 stimulates EP300 transcription regulation activity. Triggers ZBTB4 protein degradation in response to DNA damage. In response to DNA damage, phosphorylates DAZAP2 which localizes DAZAP2 to the nucleus, reduces interaction of DAZAP2 with HIPK2 and prevents DAZAP2-dependent ubiquitination of HIPK2 by E3 ubiquitin-protein ligase SIAH1 and subsequent proteasomal degradation. Modulates HMGA1 DNA-binding affinity. In response to high glucose, triggers phosphorylation-mediated subnuclear localization shifting of PDX1. Involved in the regulation of eye size, lens formation and retinal lamination during late embryogenesis. The chain is Homeodomain-interacting protein kinase 2 (Hipk2) from Mus musculus (Mouse).